A 288-amino-acid polypeptide reads, in one-letter code: Acetyl-coenzyme A carboxylase carboxyl transferase subunit beta (288 aa).

A CoA carboxyltransferase N-terminal domain is found at 24-288; that stretch reads LWVKCPESGE…TRTPRASEAA (265 aa).

This sequence belongs to the AccD/PCCB family. Acetyl-CoA carboxylase is a heterohexamer composed of biotin carboxyl carrier protein (AccB), biotin carboxylase (AccC) and two subunits each of ACCase subunit alpha (AccA) and ACCase subunit beta (AccD).

The protein resides in the cytoplasm. The enzyme catalyses N(6)-carboxybiotinyl-L-lysyl-[protein] + acetyl-CoA = N(6)-biotinyl-L-lysyl-[protein] + malonyl-CoA. The protein operates within lipid metabolism; malonyl-CoA biosynthesis; malonyl-CoA from acetyl-CoA: step 1/1. Its function is as follows. Component of the acetyl coenzyme A carboxylase (ACC) complex. Biotin carboxylase (BC) catalyzes the carboxylation of biotin on its carrier protein (BCCP) and then the CO(2) group is transferred by the transcarboxylase to acetyl-CoA to form malonyl-CoA. The polypeptide is Acetyl-coenzyme A carboxylase carboxyl transferase subunit beta (Methylocella silvestris (strain DSM 15510 / CIP 108128 / LMG 27833 / NCIMB 13906 / BL2)).